Here is a 610-residue protein sequence, read N- to C-terminus: DNA mismatch repair protein MutL (610 aa).

The protein belongs to the DNA mismatch repair MutL/HexB family.

In terms of biological role, this protein is involved in the repair of mismatches in DNA. It is required for dam-dependent methyl-directed DNA mismatch repair. May act as a 'molecular matchmaker', a protein that promotes the formation of a stable complex between two or more DNA-binding proteins in an ATP-dependent manner without itself being part of a final effector complex. This is DNA mismatch repair protein MutL from Rickettsia rickettsii (strain Iowa).